A 149-amino-acid polypeptide reads, in one-letter code: Large ribosomal subunit protein bL9 (149 aa).

This sequence belongs to the bacterial ribosomal protein bL9 family.

Its function is as follows. Binds to the 23S rRNA. This chain is Large ribosomal subunit protein bL9 (rplI), found in Geobacillus stearothermophilus (Bacillus stearothermophilus).